The sequence spans 96 residues: MNIFKIFFILNYTIIFLIKIYQNTFSKLFGQQCIYKPTCSKYSIECLKKYNFLTALVLMTLRTIRCNALFKGGNDFIPKYNPISTSLKEFQKRLIK.

This sequence belongs to the UPF0161 family.

It localises to the cell inner membrane. Could be involved in insertion of integral membrane proteins into the membrane. The sequence is that of Putative membrane protein insertion efficiency factor from Borreliella afzelii (strain PKo) (Borrelia afzelii).